Consider the following 492-residue polypeptide: N-succinylglutamate 5-semialdehyde dehydrogenase (492 aa).

220–225 (GSASTG) is an NAD(+) binding site. Catalysis depends on residues Glu-243 and Cys-277.

Belongs to the aldehyde dehydrogenase family. AstD subfamily.

The enzyme catalyses N-succinyl-L-glutamate 5-semialdehyde + NAD(+) + H2O = N-succinyl-L-glutamate + NADH + 2 H(+). It participates in amino-acid degradation; L-arginine degradation via AST pathway; L-glutamate and succinate from L-arginine: step 4/5. Functionally, catalyzes the NAD-dependent reduction of succinylglutamate semialdehyde into succinylglutamate. In Salmonella typhi, this protein is N-succinylglutamate 5-semialdehyde dehydrogenase.